We begin with the raw amino-acid sequence, 486 residues long: Glutamate--tRNA ligase (486 aa).

Positions 11–21 match the 'HIGH' region motif; sequence PSPTGLLHIGN. The 'KMSKS' region signature appears at 255-259; it reads KLSKR. Lysine 258 contacts ATP.

The protein belongs to the class-I aminoacyl-tRNA synthetase family. Glutamate--tRNA ligase type 1 subfamily. In terms of assembly, monomer.

It is found in the cytoplasm. It carries out the reaction tRNA(Glu) + L-glutamate + ATP = L-glutamyl-tRNA(Glu) + AMP + diphosphate. Catalyzes the attachment of glutamate to tRNA(Glu) in a two-step reaction: glutamate is first activated by ATP to form Glu-AMP and then transferred to the acceptor end of tRNA(Glu). This Streptococcus pneumoniae (strain ATCC BAA-255 / R6) protein is Glutamate--tRNA ligase.